Reading from the N-terminus, the 170-residue chain is MTASTSSTPSTSTKIPSSSKSSVTKQTKQKRNERERKRVDQVNQGFVLLQERVPKAAGNKAKLSKVETLREAARYIQELQKQLGMSSTSFHNSMPADFPTPEQSPVYPQSVCSMMAQTPSPSYTSPYYPPPQMMSSNQHDMSSHYYQESSSSSASTSGDHHSFYSHTETY.

Residues 1–26 show a composition bias toward low complexity; it reads MTASTSSTPSTSTKIPSSSKSSVTKQ. 2 disordered regions span residues 1–42 and 118–170; these read MTAS…VDQV and TPSP…TETY. The basic motif; degenerate stretch occupies residues 26 to 39; the sequence is QTKQKRNERERKRV. Positions 26–79 constitute a bHLH domain; it reads QTKQKRNERERKRVDQVNQGFVLLQERVPKAAGNKAKLSKVETLREAARYIQEL. Positions 30 to 40 are enriched in basic and acidic residues; sequence KRNERERKRVD. Residues 40–79 form a helix-loop-helix motif region; sequence DQVNQGFVLLQERVPKAAGNKAKLSKVETLREAARYIQEL. Over residues 143–157 the composition is skewed to low complexity; that stretch reads SHYYQESSSSSASTS.

In terms of assembly, efficient DNA binding requires dimerization with another bHLH protein. Forms a heterodimer with hlh-2. Expressed in the ADL sensory neurons.

It is found in the nucleus. Its function is as follows. Probable transcriptional regulator. May mediate transcriptional activation by binding to the E-box motif 5'-CANNTG-3'. Plays a role in the differentiation of the hermaphrodite-specific motor neurons (HSN) that are required for normal egg laying. Might play a role in serotonin production by regulating expression of the tryptophan hydrolase tph-1 which catalyzes serotonin synthesis, in the HSN neurons. Also plays a role in HSN axon guidance towards the vulva and the ventral nerve cord, possibly by promoting the expression of the netrin receptor unc-40. Under feeding conditions, involved in the regulation of the srh-234 chemoreceptor encoding gene expression in the ADL sensory neurons. Together with hlh-2, involved in the induction of programmed cell death in the sister cells of the serotonergic neurosecretory motor (NSM) neurons, probably through the activation of egl-1 transcription. This is Helix-loop-helix protein 3 from Caenorhabditis elegans.